A 612-amino-acid chain; its full sequence is Transcription factor ffsR (612 aa).

The segment covering Met-1 to Glu-12 has biased composition (polar residues). The tract at residues Met-1 to Ser-21 is disordered. Positions Cys-28–Cys-60 form a DNA-binding region, zn(2)-C6 fungal-type. Over residues Glu-73–His-82 the composition is skewed to basic and acidic residues. Disordered stretches follow at residues Glu-73–Gly-130, Asp-154–Ser-249, and Gly-451–Asn-470. Polar residues-rich tracts occupy residues Ser-92–Ala-103, Asp-154–Ser-169, and Leu-238–Ser-249. The segment covering Pro-458–Asn-470 has biased composition (low complexity).

The protein resides in the nucleus. Functionally, transcription factor that specifically regulates the expression of the gene cluster that mediates the biosynthesis of the cytotoxic leucine-containing cytochalasans, including aspochalasin C, aspochalasin E, TMC-169, flavichalasine F, aspergillin PZ, aspochalasin M and flavichalasine G. This is Transcription factor ffsR from Aspergillus flavipes.